The following is a 141-amino-acid chain: Nucleoside diphosphate kinase (141 aa).

ATP contacts are provided by Lys9, Phe57, Arg85, Thr91, Arg102, and Asn112. His115 (pros-phosphohistidine intermediate) is an active-site residue.

This sequence belongs to the NDK family. Homotetramer. Mg(2+) is required as a cofactor.

The protein resides in the cytoplasm. The catalysed reaction is a 2'-deoxyribonucleoside 5'-diphosphate + ATP = a 2'-deoxyribonucleoside 5'-triphosphate + ADP. It carries out the reaction a ribonucleoside 5'-diphosphate + ATP = a ribonucleoside 5'-triphosphate + ADP. In terms of biological role, major role in the synthesis of nucleoside triphosphates other than ATP. The ATP gamma phosphate is transferred to the NDP beta phosphate via a ping-pong mechanism, using a phosphorylated active-site intermediate. The polypeptide is Nucleoside diphosphate kinase (Chlamydia trachomatis serovar D (strain ATCC VR-885 / DSM 19411 / UW-3/Cx)).